The sequence spans 475 residues: Ribulose bisphosphate carboxylase large chain (475 aa).

A propeptide spanning residues 1 to 2 (MA) is cleaved from the precursor. Pro-3 is subject to N-acetylproline. Lys-14 carries the N6,N6,N6-trimethyllysine modification. Residues Asn-123 and Thr-173 each contribute to the substrate site. The Proton acceptor role is filled by Lys-175. Lys-177 contributes to the substrate binding site. Mg(2+) contacts are provided by Lys-201, Asp-203, and Glu-204. Lys-201 carries the post-translational modification N6-carboxylysine. The Proton acceptor role is filled by His-294. Residues Arg-295, His-327, and Ser-379 each coordinate substrate.

Belongs to the RuBisCO large chain family. Type I subfamily. In terms of assembly, heterohexadecamer of 8 large chains and 8 small chains; disulfide-linked. The disulfide link is formed within the large subunit homodimers. The cofactor is Mg(2+). Post-translationally, the disulfide bond which can form in the large chain dimeric partners within the hexadecamer appears to be associated with oxidative stress and protein turnover.

It localises to the plastid. It is found in the chloroplast. The catalysed reaction is 2 (2R)-3-phosphoglycerate + 2 H(+) = D-ribulose 1,5-bisphosphate + CO2 + H2O. It carries out the reaction D-ribulose 1,5-bisphosphate + O2 = 2-phosphoglycolate + (2R)-3-phosphoglycerate + 2 H(+). Functionally, ruBisCO catalyzes two reactions: the carboxylation of D-ribulose 1,5-bisphosphate, the primary event in carbon dioxide fixation, as well as the oxidative fragmentation of the pentose substrate in the photorespiration process. Both reactions occur simultaneously and in competition at the same active site. The protein is Ribulose bisphosphate carboxylase large chain of Tupiella akineta (Green alga).